A 113-amino-acid chain; its full sequence is Putative pterin-4-alpha-carbinolamine dehydratase (113 aa).

It belongs to the pterin-4-alpha-carbinolamine dehydratase family.

The enzyme catalyses (4aS,6R)-4a-hydroxy-L-erythro-5,6,7,8-tetrahydrobiopterin = (6R)-L-erythro-6,7-dihydrobiopterin + H2O. This Rickettsia bellii (strain OSU 85-389) protein is Putative pterin-4-alpha-carbinolamine dehydratase.